Here is a 320-residue protein sequence, read N- to C-terminus: 1,5-anhydro-D-fructose reductase (320 aa).

D35 lines the NADP(+) pocket. Catalysis depends on Y40, which acts as the Proton donor. H102 contacts substrate. Residues Q194 and 265 to 277 (IPGS…IKEN) each bind NADP(+).

This sequence belongs to the aldo/keto reductase family. As to quaternary structure, monomer. Specifically expressed in testis. Expressed in testicular germ cells and testis interstitial cells.

Its subcellular location is the cytoplasm. The enzyme catalyses 1,5-anhydro-D-glucitol + NADP(+) = 1,5-anhydro-D-fructose + NADPH + H(+). With respect to regulation, inhibited by p-chloromercuribenzoic acid and alkyliodines. Its function is as follows. Catalyzes the NADPH-dependent reduction of 1,5-anhydro-D-fructose (AF) to 1,5-anhydro-D-glucitol. Has low NADPH-dependent reductase activity towards 9,10-phenanthrenequinone (in vitro). The sequence is that of 1,5-anhydro-D-fructose reductase (AKR1E2) from Homo sapiens (Human).